The sequence spans 333 residues: Ferrochelatase (333 aa).

Positions 202 and 284 each coordinate Fe cation.

It belongs to the ferrochelatase family.

The protein localises to the cytoplasm. It carries out the reaction heme b + 2 H(+) = protoporphyrin IX + Fe(2+). It participates in porphyrin-containing compound metabolism; protoheme biosynthesis; protoheme from protoporphyrin-IX: step 1/1. Its function is as follows. Catalyzes the ferrous insertion into protoporphyrin IX. This is Ferrochelatase from Francisella tularensis subsp. mediasiatica (strain FSC147).